We begin with the raw amino-acid sequence, 481 residues long: Cytochrome P450 monooxygenase dpfgJ (481 aa).

Residues 23-43 form a helical membrane-spanning segment; sequence LVFTQAAVIGSILFVFLLGLY. Asn-338 carries N-linked (GlcNAc...) asparagine glycosylation. Cys-427 provides a ligand contact to heme.

The protein belongs to the cytochrome P450 family. Requires heme as cofactor.

The protein resides in the membrane. Its pathway is secondary metabolite biosynthesis; terpenoid biosynthesis. Cytochrome P450 monooxygenase; part of the gene cluster that mediates the biosynthesis of diterpenoid pyrones. The first step of the pathway is the synthesis of the alpha-pyrone moiety by the polyketide synthase dpfgA via condensation of one acetyl-CoA starter unit with 3 malonyl-CoA units and 2 methylations. The alpha-pyrone is then combined with geranylgeranyl pyrophosphate (GGPP) formed by the GGPP synthase dpfgD through the action of the prenyltransferase dpfgC to yield a linear alpha-pyrone diterpenoid. Subsequent steps in the diterpenoid pyrone biosynthetic pathway involve the decalin core formation, which is initiated by the epoxidation of the C10-C11 olefin by the FAD-dependent oxidoreductase dpfgE, and is followed by a cyclization cascade catalyzed by the terpene cyclase dpfgB. The short chain dehydrogenase/reductase dpfgG then oxidizes the 8S hydroxy group to a ketone and the short chain dehydrogenase/reductase dpfgH reduces the ketone to the 8R hydroxy group to yield higginsianin B. Higginsianin B is further methylated by the methyltransferase dpfgI to produce the intermediate named FDDP B. The cytochrome P450 monooxygenase dfgpJ then catalyzes a three-step oxidation at C-27 to generate a carboxylic acid as well as C-26 hydroxylation. Finally, methyltransferase dpfgK methylates the carboxylic acid generated by dpfgJ, yielding the final diterpenoid pyrones from the pathway which were named FDDP D and FDDP E. The chain is Cytochrome P450 monooxygenase dpfgJ from Gibberella zeae (strain ATCC MYA-4620 / CBS 123657 / FGSC 9075 / NRRL 31084 / PH-1) (Wheat head blight fungus).